Reading from the N-terminus, the 95-residue chain is Putative monooxygenase YcnE (95 aa).

The region spanning 2–93 is the ABM domain; that stretch reads IVLQAYIKVK…APLDVVRTEL (92 aa). Phosphoserine is present on Ser-24.

The protein belongs to the LsrG family.

In terms of biological role, putative monooxygenase that may contribute to the degradation of aromatic compounds. This is Putative monooxygenase YcnE (ycnE) from Bacillus subtilis (strain 168).